Here is a 335-residue protein sequence, read N- to C-terminus: Ferrochelatase (335 aa).

Residues histidine 211 and glutamate 290 each contribute to the Fe cation site.

Belongs to the ferrochelatase family.

The protein resides in the cytoplasm. It catalyses the reaction heme b + 2 H(+) = protoporphyrin IX + Fe(2+). The protein operates within porphyrin-containing compound metabolism; protoheme biosynthesis; protoheme from protoporphyrin-IX: step 1/1. Catalyzes the ferrous insertion into protoporphyrin IX. This Sulfurihydrogenibium sp. (strain YO3AOP1) protein is Ferrochelatase.